Reading from the N-terminus, the 661-residue chain is Acyl-coenzyme A oxidase acox-1.2 (661 aa).

Residues 147-150 (YAQT), 155-156 (GS), and glycine 189 contribute to the FAD site. Substrate contacts are provided by residues 283 to 286 (KIGY) and arginine 293. Residues arginine 318 and 338–341 (QQHR) each bind FAD. 4 residues coordinate ATP: histidine 340, serine 390, histidine 394, and glutamine 402. Glycine 409 is a binding site for FAD. A substrate-binding site is contributed by 431–432 (YE). Catalysis depends on glutamate 432, which acts as the Proton acceptor. Glutamate 434 is a binding site for FAD. Residues 525–528 (RASR) and tyrosine 573 each bind ATP. Residues 659-661 (AKL) carry the Microbody targeting signal motif.

Belongs to the acyl-CoA oxidase family. Homodimer. Forms a heterodimer with acox-1.1. The cofactor is FAD.

The protein resides in the peroxisome. The enzyme catalyses asc-omegaC5-CoA + O2 = asc-omegaDeltaC5-CoA + H2O2. It functions in the pathway lipid metabolism; peroxisomal fatty acid beta-oxidation. With respect to regulation, activated by ATP. ATP binding leads to a conformational change that promotes FAD cofactor binding and enzyme activity. ATP binding likely occurs during acox-1.2 folding and/or dimer formation. The preference for processing substrates with shorter fatty acid chains is likely due to the closed conformation of the active site. Functionally, involved in the first step of peroxisomal beta-oxidation by catalyzing the desaturation of fatty acid-derived side chains of ascaroside pheromones, which regulates development and behavior. Specifically, shortens ascarosides with 5-carbon omega side chain (asc-omega-C5). Does not shorten indol-3-carbonyl(IC)-ascaroside with 7-carbon or 9-carbon side chains. Does not catalyze the desaturation of fatty acids or hydroxylated fatty acids. The sequence is that of Acyl-coenzyme A oxidase acox-1.2 from Caenorhabditis elegans.